The primary structure comprises 65 residues: Beta-defensin 106A (65 aa).

The first 20 residues, 1–20 (MRTFLFLFAVLFFLTPAKNE), serve as a signal peptide directing secretion. Cystine bridges form between cysteine 26-cysteine 53, cysteine 33-cysteine 47, and cysteine 37-cysteine 54.

This sequence belongs to the beta-defensin family. As to quaternary structure, monomer. Interacts with CCR2 (via extracellular N-terminal region); this interaction may preferentially require specific tyrosine sulfation on CCR2.

Its subcellular location is the secreted. The protein resides in the membrane. Functionally, has antibacterial activity. Acts as a ligand for C-C chemokine receptor CCR2. This chain is Beta-defensin 106A (DEFB106A), found in Pongo pygmaeus (Bornean orangutan).